The sequence spans 294 residues: Zinc finger protein 346 (294 aa).

An N-acetylmethionine modification is found at Met1. Low complexity predominate over residues 1-19 (MECPAPDATDAADPGEAGP). Residues 1 to 35 (MECPAPDATDAADPGEAGPYKGSEEPEGREPDGVR) are disordered. The segment covering 22–35 (GSEEPEGREPDGVR) has biased composition (basic and acidic residues). The Matrin-type 1 zinc-finger motif lies at 70-104 (FTSTQCKVCCAMLISESQKLAHYQSKKHANKVKRY). 4 residues coordinate Zn(2+): Cys75, Cys78, His91, and His97. Lys114 is covalently cross-linked (Glycyl lysine isopeptide (Lys-Gly) (interchain with G-Cter in SUMO2)). The segment at 131 to 165 (DKNHCCPICNMTFSSPAVAQSHYLGKTHAKSLKLK) adopts a Matrin-type 2 zinc-finger fold. Positions 136, 139, 152, and 158 each coordinate Zn(2+). Residue Lys170 forms a Glycyl lysine isopeptide (Lys-Gly) (interchain with G-Cter in SUMO2) linkage. Matrin-type zinc fingers lie at residues 182–216 (DPDK…ETKL) and 236–270 (GKGY…SPKT). The tract at residues 269–294 (KTLVTLGSQTPVQTQPTPKDSSTVQD) is disordered.

In terms of assembly, forms a heteromeric complex with XPO5 and ILF3. Found in a nuclear export complex with XPO5, RAN, ILF3, ZNF346 and double-stranded RNA. Interacts with XPO5. Interacts with ILF3 in an RNA-independent manner. Expressed in all tissues tested, including heart, brain, spleen, lung, liver, muscle, kidney and testis. Exogenous expression induced apoptosis.

Its subcellular location is the nucleus. The protein resides in the nucleolus. The protein localises to the cytoplasm. In terms of biological role, binds with low affinity to dsDNA and ssRNA, and with high affinity to dsRNA, with no detectable sequence specificity. May bind to specific miRNA hairpins. The protein is Zinc finger protein 346 (Znf346) of Mus musculus (Mouse).